The sequence spans 294 residues: 4-hydroxy-tetrahydrodipicolinate synthase (294 aa).

Pyruvate is bound at residue threonine 47. Residue tyrosine 135 is the Proton donor/acceptor of the active site. Lysine 163 (schiff-base intermediate with substrate) is an active-site residue. Pyruvate is bound at residue valine 205.

Belongs to the DapA family. As to quaternary structure, homotetramer; dimer of dimers.

The protein resides in the cytoplasm. The enzyme catalyses L-aspartate 4-semialdehyde + pyruvate = (2S,4S)-4-hydroxy-2,3,4,5-tetrahydrodipicolinate + H2O + H(+). Its pathway is amino-acid biosynthesis; L-lysine biosynthesis via DAP pathway; (S)-tetrahydrodipicolinate from L-aspartate: step 3/4. In terms of biological role, catalyzes the condensation of (S)-aspartate-beta-semialdehyde [(S)-ASA] and pyruvate to 4-hydroxy-tetrahydrodipicolinate (HTPA). The sequence is that of 4-hydroxy-tetrahydrodipicolinate synthase from Rickettsia bellii (strain RML369-C).